We begin with the raw amino-acid sequence, 411 residues long: 1-deoxy-D-xylulose 5-phosphate reductoisomerase (411 aa).

Thr-12, Gly-13, Ser-14, Ile-15, and Asn-127 together coordinate NADPH. Lys-128 provides a ligand contact to 1-deoxy-D-xylulose 5-phosphate. Glu-129 lines the NADPH pocket. Asp-153 serves as a coordination point for Mn(2+). 1-deoxy-D-xylulose 5-phosphate contacts are provided by Ser-154, Glu-155, Ser-189, and His-212. Glu-155 contacts Mn(2+). Residue Gly-218 participates in NADPH binding. 1-deoxy-D-xylulose 5-phosphate is bound by residues Ser-225, Asn-230, Lys-231, and Glu-234. Glu-234 lines the Mn(2+) pocket.

It belongs to the DXR family. Mg(2+) serves as cofactor. Mn(2+) is required as a cofactor.

The catalysed reaction is 2-C-methyl-D-erythritol 4-phosphate + NADP(+) = 1-deoxy-D-xylulose 5-phosphate + NADPH + H(+). It participates in isoprenoid biosynthesis; isopentenyl diphosphate biosynthesis via DXP pathway; isopentenyl diphosphate from 1-deoxy-D-xylulose 5-phosphate: step 1/6. Catalyzes the NADPH-dependent rearrangement and reduction of 1-deoxy-D-xylulose-5-phosphate (DXP) to 2-C-methyl-D-erythritol 4-phosphate (MEP). This Colwellia psychrerythraea (strain 34H / ATCC BAA-681) (Vibrio psychroerythus) protein is 1-deoxy-D-xylulose 5-phosphate reductoisomerase.